The chain runs to 435 residues: Zinc metalloproteinase/disintegrin (435 aa).

A propeptide spanning residues 1 to 26 is cleaved from the precursor; the sequence is KMCGVTQNWESYESTKKASQLNLTPE. A Pyrrolidone carboxylic acid modification is found at Gln27. Residues 33-227 form the Peptidase M12B domain; it reads RYIKLGIFVD…HNFQCILNAP (195 aa). Residue Asn115 is glycosylated (N-linked (GlcNAc...) asparagine). Disulfide bonds link Cys144/Cys222, Cys184/Cys206, and Cys186/Cys189. His169 serves as a coordination point for Zn(2+). The active site involves Glu170. His173 and His179 together coordinate Zn(2+). The propeptide occupies 228 to 243; it reads LRTDTVSTPVSGNELL. The region spanning 235-318 is the Disintegrin domain; that stretch reads TPVSGNELLE…DCPTDDFHRN (84 aa). 6 residues coordinate Ca(2+): Val237, Asn240, Leu242, Glu244, Glu247, and Asp250. 6 disulfide bridges follow: Cys249-Cys264, Cys251-Cys259, Cys258-Cys281, Cys272-Cys278, Cys277-Cys303, and Cys290-Cys310. Positions 296–298 match the D/ECD-tripeptide motif; that stretch reads ECD.

It belongs to the venom metalloproteinase (M12B) family. P-III subfamily. P-IIIb sub-subfamily. In terms of assembly, monomer. The cofactor is Zn(2+). In terms of processing, the N-terminus of the metalloproteinase is blocked. As to expression, expressed by the venom gland.

It localises to the secreted. With respect to regulation, inhibited by EDTA. In terms of biological role, cleaves the alpha chain of fibrinogen (FGA) preferentially and cleaves the beta chain (FGB) either on longer incubation or at high concentrations. Induces apoptosis of endothelial cells (prior to cell detachment). Its function is as follows. Disintegrin: inhibits platelet aggregation induced by ADP, thrombin, platelet-activating factor and collagen. Acts by inhibiting fibrinogen interaction with platelet receptors GPIIb/GPIIIa (ITGA2B/ITGB3). The protein is Zinc metalloproteinase/disintegrin of Craspedocephalus gramineus (Bamboo pit viper).